The sequence spans 196 residues: ATP-dependent Clp protease proteolytic subunit (196 aa).

Ser96 (nucleophile) is an active-site residue. His121 is a catalytic residue.

Belongs to the peptidase S14 family. Fourteen ClpP subunits assemble into 2 heptameric rings which stack back to back to give a disk-like structure with a central cavity, resembling the structure of eukaryotic proteasomes.

It localises to the cytoplasm. It carries out the reaction Hydrolysis of proteins to small peptides in the presence of ATP and magnesium. alpha-casein is the usual test substrate. In the absence of ATP, only oligopeptides shorter than five residues are hydrolyzed (such as succinyl-Leu-Tyr-|-NHMec, and Leu-Tyr-Leu-|-Tyr-Trp, in which cleavage of the -Tyr-|-Leu- and -Tyr-|-Trp bonds also occurs).. Functionally, cleaves peptides in various proteins in a process that requires ATP hydrolysis. Has a chymotrypsin-like activity. Plays a major role in the degradation of misfolded proteins. This Streptococcus pneumoniae (strain P1031) protein is ATP-dependent Clp protease proteolytic subunit.